The sequence spans 699 residues: Elongation factor G (699 aa).

In terms of domain architecture, tr-type G spans 8–290 (NRYRNIGICA…AVIEFLPAPD (283 aa)). Residues 17–24 (AHVDAGKT), 88–92 (DTPGH), and 142–145 (NKMD) contribute to the GTP site.

Belongs to the TRAFAC class translation factor GTPase superfamily. Classic translation factor GTPase family. EF-G/EF-2 subfamily.

The protein resides in the cytoplasm. Its function is as follows. Catalyzes the GTP-dependent ribosomal translocation step during translation elongation. During this step, the ribosome changes from the pre-translocational (PRE) to the post-translocational (POST) state as the newly formed A-site-bound peptidyl-tRNA and P-site-bound deacylated tRNA move to the P and E sites, respectively. Catalyzes the coordinated movement of the two tRNA molecules, the mRNA and conformational changes in the ribosome. The polypeptide is Elongation factor G (Alcanivorax borkumensis (strain ATCC 700651 / DSM 11573 / NCIMB 13689 / SK2)).